The following is a 261-amino-acid chain: Kallikrein 1-related peptidase b5 (261 aa).

An N-terminal signal peptide occupies residues 1-18; that stretch reads MWFLILFLALSLGGIDAA. The propeptide at 19-24 is activation peptide; it reads PPVQSR. In terms of domain architecture, Peptidase S1 spans 25 to 258; the sequence is IFGGFNCEKN…FNSWIKDTIA (234 aa). 5 disulfide bridges follow: cysteine 31/cysteine 173, cysteine 50/cysteine 66, cysteine 152/cysteine 219, cysteine 184/cysteine 198, and cysteine 209/cysteine 234. Histidine 65 (charge relay system) is an active-site residue. The N-linked (GlcNAc...) asparagine glycan is linked to asparagine 102. Aspartate 120 serves as the catalytic Charge relay system. Serine 213 acts as the Charge relay system in catalysis.

This sequence belongs to the peptidase S1 family. Kallikrein subfamily.

It catalyses the reaction Preferential cleavage of Arg-|-Xaa bonds in small molecule substrates. Highly selective action to release kallidin (lysyl-bradykinin) from kininogen involves hydrolysis of Met-|-Xaa or Leu-|-Xaa.. Glandular kallikreins cleave Met-Lys and Arg-Ser bonds in kininogen to release Lys-bradykinin. This is Kallikrein 1-related peptidase b5 (Klk1b5) from Mus musculus (Mouse).